Reading from the N-terminus, the 453-residue chain is Allantoinase (453 aa).

The Zn(2+) site is built by His-59, His-61, Lys-146, His-186, His-242, and Asp-315. The residue at position 146 (Lys-146) is an N6-carboxylysine.

Belongs to the metallo-dependent hydrolases superfamily. Allantoinase family. In terms of assembly, homotetramer. Zn(2+) is required as a cofactor. In terms of processing, carboxylation allows a single lysine to coordinate two zinc ions.

The enzyme catalyses (S)-allantoin + H2O = allantoate + H(+). Its pathway is nitrogen metabolism; (S)-allantoin degradation; allantoate from (S)-allantoin: step 1/1. Catalyzes the conversion of allantoin (5-ureidohydantoin) to allantoic acid by hydrolytic cleavage of the five-member hydantoin ring. This is Allantoinase from Salmonella gallinarum (strain 287/91 / NCTC 13346).